We begin with the raw amino-acid sequence, 363 residues long: Mitogen-activated protein kinase kinase 2 (363 aa).

S56 carries the phosphoserine modification. The Protein kinase domain maps to 70–330 (LDMVKVIGKG…AKELMEHPFL (261 aa)). ATP-binding positions include 76-84 (IGKGSSGVV) and K99. The active-site Proton acceptor is the D192. 3 positions are modified to phosphothreonine: T220, T226, and T230.

This sequence belongs to the protein kinase superfamily. STE Ser/Thr protein kinase family. MAP kinase kinase subfamily. As to quaternary structure, interacts with MEKK1, MPK4 and MPK6. May form a ternary complex composed of MEKK1 and MKK1/MKK2 and MPK4. Interacts with MPK10 and MPK11. Interacts with MAPKKK5 mainly in the cytosol. Phosphorylation at Thr-220 and Thr-226 by MAP kinase kinase kinases positively regulates kinase activity. Phosphorylated by MEKK1 in response to cold. Phosphorylated by MAPKKK5.

The enzyme catalyses L-seryl-[protein] + ATP = O-phospho-L-seryl-[protein] + ADP + H(+). The catalysed reaction is L-threonyl-[protein] + ATP = O-phospho-L-threonyl-[protein] + ADP + H(+). It catalyses the reaction L-tyrosyl-[protein] + ATP = O-phospho-L-tyrosyl-[protein] + ADP + H(+). With respect to regulation, activated in response to cold and salt stresses through serine and threonine phosphorylation by MEKK1. MEKK1, MKK1/MKK2 and MPK4 function in a signaling pathway that modulates the expression of genes responding to biotic and abiotic stresses and also plays an important role in pathogen defense by negatively regulating innate immunity. Plays a role in abiotic stress tolerance and plant disease resistance through activation of MPK4 and MPK6 by phosphorylation. Acts redundantly with MKK1. This Arabidopsis thaliana (Mouse-ear cress) protein is Mitogen-activated protein kinase kinase 2 (MKK2).